The sequence spans 440 residues: Adenylyltransferase and sulfurtransferase UBA4 (440 aa).

Met1 bears the N-acetylmethionine mark. Residues Gly77, Asp98, 105 to 109 (SNLHR), Lys122, and 166 to 167 (DS) each bind ATP. Positions 208 and 211 each coordinate Zn(2+). The active-site Glycyl thioester intermediate; for adenylyltransferase activity is Cys225. Zn(2+)-binding residues include Cys286 and Cys289. Ser326 carries the post-translational modification Phosphoserine. The region spanning 339–438 (FLAKHIFLDV…YIDDIDQTIP (100 aa)) is the Rhodanese domain. The active-site Cysteine persulfide intermediate; for sulfurtransferase activity is the Cys397.

It in the N-terminal section; belongs to the HesA/MoeB/ThiF family. UBA4 subfamily. Zn(2+) serves as cofactor.

The protein resides in the cytoplasm. It localises to the cytosol. It participates in tRNA modification; 5-methoxycarbonylmethyl-2-thiouridine-tRNA biosynthesis. Functionally, plays a central role in 2-thiolation of mcm(5)S(2)U at tRNA wobble positions of cytosolic tRNA(Lys), tRNA(Glu) and tRNA(Gln). Acts by mediating the C-terminal thiocarboxylation of sulfur carrier URM1. Its N-terminus first activates URM1 as acyl-adenylate (-COAMP), then the persulfide sulfur on the catalytic cysteine is transferred to URM1 to form thiocarboxylation (-COSH) of its C-terminus. The reaction probably involves hydrogen sulfide that is generated from the persulfide intermediate and that acts as a nucleophile towards URM1. Subsequently, a transient disulfide bond is formed. Does not use thiosulfate as sulfur donor; NFS1 probably acting as a sulfur donor for thiocarboxylation reactions. Prior mcm(5) tRNA modification by the elongator complex is required for 2-thiolation. May also be involved in protein urmylation. The protein is Adenylyltransferase and sulfurtransferase UBA4 of Saccharomyces cerevisiae (strain YJM789) (Baker's yeast).